The sequence spans 478 residues: MSKVLSSLPVGERVGIAFSGGLDTSCAVAWMREKGAVPCAYTADIGQYDEPNIEEVPGRATEYGAEIARLVDAKRALVEEGLIALQCGAFHIRSGGKTYFNTTPLGRAVTGVMLVRAMRDDDVEIWGDGSTYKGNDIERFYRYGLIANPRLRIYKPWLDTAFVEELGGRTEISEWLVARGFPYRDATEKAYSTDANIWGATHEAKRLEELDAGLDIVEPIMGVAAWREDIEVAPETVSVSFEYGRPVALNGIEFADPVALVPEANAIGGRHGLGASDQIENRIIEAKSRGIYEAPGMALLHIAYERLLNAIHNEDTVANYHTEGRRLGRLMYEGRWLDPQSLMLRESLQRWVGSAITGEVTLRLRRGDDYTILDTTGPALSYHPDKLSMERVGNAAFGPADRIGQLTMRNLDIADSRSRLEQYAATGLIGGPTAELVGELQEGSARSILELDVSPEDDALSREIDASSEGAAFDAGTD.

ATP contacts are provided by residues 17–25 (AFSGGLDTS) and Ala43. An L-citrulline-binding site is contributed by Tyr99. Positions 129 and 131 each coordinate ATP. Residues Thr131, Asn135, and Asp136 each coordinate L-aspartate. Asn135 provides a ligand contact to L-citrulline. ATP is bound at residue Asp136. Residues Arg139 and Ser192 each coordinate L-citrulline. Asp194 contributes to the ATP binding site. The L-citrulline site is built by Thr201, Glu203, and Glu280.

It belongs to the argininosuccinate synthase family. Type 2 subfamily. As to quaternary structure, homotetramer.

Its subcellular location is the cytoplasm. The catalysed reaction is L-citrulline + L-aspartate + ATP = 2-(N(omega)-L-arginino)succinate + AMP + diphosphate + H(+). It participates in amino-acid biosynthesis; L-arginine biosynthesis; L-arginine from L-ornithine and carbamoyl phosphate: step 2/3. This Leifsonia xyli subsp. xyli (strain CTCB07) protein is Argininosuccinate synthase.